A 442-amino-acid chain; its full sequence is GTPase Der (442 aa).

2 consecutive EngA-type G domains span residues 3–167 (PTIV…PADD) and 177–350 (PRVA…AAAM). Residues 9 to 16 (GRPNVGKS), 56 to 60 (DTAGF), 119 to 122 (NKAE), 183 to 190 (GRPNVGKS), 230 to 234 (DTAGL), and 295 to 298 (NKWD) contribute to the GTP site. The region spanning 351–435 (SNLSTPRLTR…PLRIQFRTAH (85 aa)) is the KH-like domain.

The protein belongs to the TRAFAC class TrmE-Era-EngA-EngB-Septin-like GTPase superfamily. EngA (Der) GTPase family. As to quaternary structure, associates with the 50S ribosomal subunit.

In terms of biological role, GTPase that plays an essential role in the late steps of ribosome biogenesis. The protein is GTPase Der of Azoarcus sp. (strain BH72).